The sequence spans 467 residues: Glutamate--tRNA ligase (467 aa).

The 'HIGH' region motif lies at 9 to 19 (PSPTGYLHIGG). The 'KMSKS' region motif lies at 237–241 (KLSKR). Lysine 240 is a binding site for ATP.

Belongs to the class-I aminoacyl-tRNA synthetase family. Glutamate--tRNA ligase type 1 subfamily. As to quaternary structure, monomer.

It localises to the cytoplasm. The catalysed reaction is tRNA(Glu) + L-glutamate + ATP = L-glutamyl-tRNA(Glu) + AMP + diphosphate. Functionally, catalyzes the attachment of glutamate to tRNA(Glu) in a two-step reaction: glutamate is first activated by ATP to form Glu-AMP and then transferred to the acceptor end of tRNA(Glu). In Stenotrophomonas maltophilia (strain R551-3), this protein is Glutamate--tRNA ligase.